A 230-amino-acid polypeptide reads, in one-letter code: 6-carboxyhexanoate--CoA ligase (230 aa).

The protein belongs to the BioW family. As to quaternary structure, homodimer. Mg(2+) serves as cofactor.

It catalyses the reaction heptanedioate + ATP + CoA = 6-carboxyhexanoyl-CoA + AMP + diphosphate. It functions in the pathway metabolic intermediate metabolism; pimeloyl-CoA biosynthesis; pimeloyl-CoA from pimelate: step 1/1. Catalyzes the transformation of pimelate into pimeloyl-CoA with concomitant hydrolysis of ATP to AMP. In Staphylococcus aureus (strain Mu3 / ATCC 700698), this protein is 6-carboxyhexanoate--CoA ligase.